Consider the following 356-residue polypeptide: Ubiquitin-conjugating enzyme E2 variant 3 (356 aa).

Positions 1 to 83 (MSDQPGTSRP…LEDLHNYHRE (83 aa)) are disordered. The segment covering 18-32 (PTKTATRRRARPIAI) has biased composition (polar residues). Over residues 63–76 (QPRKTVPKNVPLED) the composition is skewed to basic and acidic residues. The UBC core domain maps to 169-324 (DIITEFMNRS…AREFVMKMAG (156 aa)).

The protein belongs to the ubiquitin-conjugating enzyme family. As to quaternary structure, may interact with pmk-3. As to expression, expressed ubiquitously.

The protein localises to the nucleus. It is found in the cytoplasm. It localises to the cell projection. The protein resides in the dendrite. Its subcellular location is the axon. The protein localises to the cilium. Functionally, possible negative regulator of polyubiquitination. May modulate the activity of the p38 MAP kinase pnk-3. May have a role in axon termination and synaptic transmission at motor and mechanosensory neurons. Plays a role in intraflagellar transport in cilia and cilium length regulation. The protein is Ubiquitin-conjugating enzyme E2 variant 3 of Caenorhabditis elegans.